The primary structure comprises 180 residues: Nucleoside triphosphate/diphosphate phosphatase (180 aa).

The active-site Proton donor is the arginine 26. Mg(2+)-binding residues include asparagine 90, aspartate 106, aspartate 108, aspartate 110, aspartate 123, and glutamate 126.

This sequence belongs to the Ntdp family. The cofactor is Mg(2+).

It carries out the reaction a ribonucleoside 5'-triphosphate + H2O = a ribonucleoside 5'-diphosphate + phosphate + H(+). The catalysed reaction is a ribonucleoside 5'-diphosphate + H2O = a ribonucleoside 5'-phosphate + phosphate + H(+). Its function is as follows. Has nucleoside phosphatase activity towards nucleoside triphosphates and nucleoside diphosphates. The sequence is that of Nucleoside triphosphate/diphosphate phosphatase from Staphylococcus aureus (strain Mu3 / ATCC 700698).